Reading from the N-terminus, the 861-residue chain is Protein argonaute-4 (861 aa).

One can recognise a PAZ domain in the interval 219–338 (PIIEFMCEVL…LPLEVCNIVA (120 aa)). Residues 509–820 (LIVVILPGKT…VAFRARYHLV (312 aa)) enclose the Piwi domain. The segment at 825–846 (DSAEGSHVSGQSNGRDPQALAK) is disordered.

This sequence belongs to the argonaute family. Ago subfamily. In terms of assembly, interacts with EIF4B, IMP8, PRMT5, TNRC6A and TNRC6B. Interacts with ZFP36. In terms of processing, ubiquitinated on surface-exposed lysines by a SCF-like E3 ubiquitin-protein ligase complex containing ZSWIM8 during target-directed microRNA degradation (TDMD), a process that mediates degradation of microRNAs (miRNAs). Ubiquitination by the SCF-like E3 ubiquitin-protein ligase complex containing ZSWIM8 leads to its subsequent degradation, thereby exposing miRNAs for degradation. ZSWIM8 recognizes and binds AGO4 when it is engaged with a TDMD target.

It is found in the cytoplasm. The protein localises to the P-body. In terms of biological role, required for RNA-mediated gene silencing (RNAi). Binds to short RNAs such as microRNAs (miRNAs) and represses the translation of mRNAs which are complementary to them. Lacks endonuclease activity and does not appear to cleave target mRNAs. The chain is Protein argonaute-4 (Ago4) from Mus musculus (Mouse).